A 548-amino-acid polypeptide reads, in one-letter code: CTP synthase (548 aa).

Positions 1–267 (MKTKFIFITG…DQKIAIMLQL (267 aa)) are amidoligase domain. Ser14 is a binding site for CTP. Residue Ser14 coordinates UTP. Residues 15–20 (SLGKGL) and Asp72 contribute to the ATP site. Positions 72 and 141 each coordinate Mg(2+). Residues 148-150 (DIE), 188-193 (KTKPTQ), and Lys224 each bind CTP. UTP contacts are provided by residues 188–193 (KTKPTQ) and Lys224. Residues 292–545 (TIGIVGKYVD…IKAAGKQAVK (254 aa)) form the Glutamine amidotransferase type-1 domain. Gly354 contributes to the L-glutamine binding site. Catalysis depends on Cys381, which acts as the Nucleophile; for glutamine hydrolysis. Residues 382 to 385 (LGMQ), Glu405, and Arg473 contribute to the L-glutamine site. Residues His518 and Glu520 contribute to the active site.

It belongs to the CTP synthase family. Homotetramer.

It carries out the reaction UTP + L-glutamine + ATP + H2O = CTP + L-glutamate + ADP + phosphate + 2 H(+). It catalyses the reaction L-glutamine + H2O = L-glutamate + NH4(+). The enzyme catalyses UTP + NH4(+) + ATP = CTP + ADP + phosphate + 2 H(+). It participates in pyrimidine metabolism; CTP biosynthesis via de novo pathway; CTP from UDP: step 2/2. Its activity is regulated as follows. Allosterically activated by GTP, when glutamine is the substrate; GTP has no effect on the reaction when ammonia is the substrate. The allosteric effector GTP functions by stabilizing the protein conformation that binds the tetrahedral intermediate(s) formed during glutamine hydrolysis. Inhibited by the product CTP, via allosteric rather than competitive inhibition. Its function is as follows. Catalyzes the ATP-dependent amination of UTP to CTP with either L-glutamine or ammonia as the source of nitrogen. Regulates intracellular CTP levels through interactions with the four ribonucleotide triphosphates. This Oleidesulfovibrio alaskensis (strain ATCC BAA-1058 / DSM 17464 / G20) (Desulfovibrio alaskensis) protein is CTP synthase.